The following is an 82-amino-acid chain: MLADELTIGPIRAVPMDITPKYVGIASGLMNAGSAVADIISPIAFGIIIDKTGNWSLPFYGSVALLVIGIFLTFFMRPDKSL.

The next 2 helical transmembrane spans lie at 29 to 49 and 55 to 75; these read LMNA…GIII and WSLP…LTFF.

Its subcellular location is the cell membrane. This is an uncharacterized protein from Escherichia coli (strain K12).